The chain runs to 299 residues: UPF0603 protein OsI_019212, chloroplastic (299 aa).

Low complexity-rich tracts occupy residues 1–14 and 22–36; these read METLLSPSTLLSPL and ASPAASASSSSSSPA. The N-terminal 41 residues, 1 to 41, are a transit peptide targeting the chloroplast; sequence METLLSPSTLLSPLRGSKKKPASPAASASSSSSSPARSVVS. Disordered regions lie at residues 1–60 and 244–265; these read METL…WRGD and PDPGGPTFKDNKRESNFKTKEE. The N-terminal 57 residues, 42 to 98, are a transit peptide targeting the thylakoid; sequence CALRRQQPPPQAVAAWRGDGGRGGGVGSWATFLQHGLAAAALSLAISMAPAPAPAVA. The span at 252 to 265 shows a compositional bias: basic and acidic residues; the sequence is KDNKRESNFKTKEE. The helical transmembrane segment at 276 to 296 threads the bilayer; that stretch reads VVGGLLVIAFVVPMAQYYAYI.

Belongs to the UPF0603 family.

The protein resides in the plastid. The protein localises to the chloroplast thylakoid membrane. The sequence is that of UPF0603 protein OsI_019212, chloroplastic from Oryza sativa subsp. indica (Rice).